Reading from the N-terminus, the 344-residue chain is Methionine synthase (344 aa).

Zn(2+) contacts are provided by H211, C213, E236, and C315.

Belongs to the archaeal MetE family. The cofactor is Zn(2+).

The protein operates within amino-acid biosynthesis; L-methionine biosynthesis via de novo pathway. In terms of biological role, catalyzes the transfer of a methyl group to L-homocysteine resulting in methionine formation. The physiological methyl donor is unknown. The chain is Methionine synthase from Thermoplasma volcanium (strain ATCC 51530 / DSM 4299 / JCM 9571 / NBRC 15438 / GSS1).